The following is a 248-amino-acid chain: MKIVENQPVVRRQSPQAEVTLTLPARPEAIAFAPQETALIVVDMQNAYASQGGYLDLAGFDISATAPVIANIKRAISAARAAGIKVIFFQNGWDNQYVEAGGQGSPNWHKSNALKTMRKRPELMGKLLARGDWDYDLVDELQPQAGDIVLPKPRYSGFFNTQLDSLLRSYGIHHLVFTGIATNVCVESTLRDGFFLEYFGIVLADATHQAGPQFAQQAALYNIETFFGWVSDVDSFCNTLAAPLSQTA.

Asp43 functions as the Proton acceptor in the catalytic mechanism. Lys152 is an active-site residue. Cys185 (nucleophile) is an active-site residue.

Belongs to the isochorismatase family. RutB subfamily.

The enzyme catalyses (Z)-3-ureidoacrylate + H2O + H(+) = (Z)-3-aminoacrylate + NH4(+) + CO2. It catalyses the reaction (Z)-3-ureidoacrylate + H2O = (Z)-3-aminoacrylate + carbamate + H(+). The catalysed reaction is (Z)-2-methylureidoacrylate + H2O + H(+) = (Z)-2-methylaminoacrylate + NH4(+) + CO2. Its function is as follows. Hydrolyzes ureidoacrylate to form aminoacrylate and carbamate. The carbamate hydrolyzes spontaneously, thereby releasing one of the nitrogen atoms of the pyrimidine ring as ammonia and one of its carbon atoms as CO2. This chain is Ureidoacrylate amidohydrolase RutB, found in Serratia proteamaculans (strain 568).